A 672-amino-acid polypeptide reads, in one-letter code: ABC transporter G family member 21 (672 aa).

Residues 1-35 are compositionally biased toward polar residues; the sequence is MMPPNEQESSFPKTPSANRHETSPVQENRFSSPSH. Residues 1–59 form a disordered region; the sequence is MMPPNEQESSFPKTPSANRHETSPVQENRFSSPSHVNPCLDDDNDHDGPSHQSRQSSVL. A compositionally biased stretch (low complexity) spans 50–59; that stretch reads SHQSRQSSVL. In terms of domain architecture, ABC transporter spans 68 to 322; it reads LKFEELTYSI…FGSIGYQPGS (255 aa). Position 117–124 (117–124) interacts with ATP; sequence GPSGSGKT. One can recognise an ABC transmembrane type-2 domain in the interval 411-617; that stretch reads MQFSVLLKRG…CYKLLVGVQY (207 aa). The next 6 helical transmembrane spans lie at 429–449, 460–480, 512–532, 543–563, 576–596, and 649–669; these read FSGLRIFMVMSVSLLSGLLWW, VGLLFFFSIFWGFFPLFNAIF, LPMELILPTIFVTITYWMGGL, LMIVLYNVLVAQGVGLALGAI, VLMLVFLLAGGYYIQHIPGFI, and WDVLALAVMLLLYRVLAYLAL.

The protein belongs to the ABC transporter superfamily. ABCG family. Eye pigment precursor importer (TC 3.A.1.204) subfamily.

It is found in the membrane. The polypeptide is ABC transporter G family member 21 (ABCG21) (Arabidopsis thaliana (Mouse-ear cress)).